Consider the following 58-residue polypeptide: Small ribosomal subunit protein bS21 (58 aa).

Belongs to the bacterial ribosomal protein bS21 family.

This Lactobacillus acidophilus (strain ATCC 700396 / NCK56 / N2 / NCFM) protein is Small ribosomal subunit protein bS21.